We begin with the raw amino-acid sequence, 314 residues long: Pectin lyase (314 aa).

R202 is an active-site residue.

This sequence belongs to the polysaccharide lyase 1 family.

It carries out the reaction Eliminative cleavage of (1-&gt;4)-alpha-D-galacturonan methyl ester to give oligosaccharides with 4-deoxy-6-O-methyl-alpha-D-galact-4-enuronosyl groups at their non-reducing ends.. The protein is Pectin lyase (pnl) of Pectobacterium carotovorum (Erwinia carotovora).